Reading from the N-terminus, the 256-residue chain is Trypsin, alkaline B (256 aa).

The signal sequence occupies residues Met-1–Ala-17. A propeptide spans Val-18–Arg-24 (activation peptide). Residues Ile-25–Ser-256 form the Peptidase S1 domain. Cys-55 and Cys-71 are joined by a disulfide. Residues His-70 and Asp-115 each act as charge relay system in the active site. 2 disulfides stabilise this stretch: Cys-180–Cys-197 and Cys-209–Cys-233. The active-site Charge relay system is the Ser-213.

The protein belongs to the peptidase S1 family. As to expression, midgut.

The protein resides in the secreted. It is found in the extracellular space. The catalysed reaction is Preferential cleavage: Arg-|-Xaa, Lys-|-Xaa.. The sequence is that of Trypsin, alkaline B from Manduca sexta (Tobacco hawkmoth).